The primary structure comprises 77 residues: Translation initiation factor IF-1, chloroplastic (77 aa).

An S1-like domain is found at 1–71 (MKEQKLIHEG…TRGRIIYRLR (71 aa)).

The protein belongs to the IF-1 family. As to quaternary structure, component of the 30S ribosomal translation pre-initiation complex which assembles on the 30S ribosome in the order IF-2 and IF-3, IF-1 and N-formylmethionyl-tRNA(fMet); mRNA recruitment can occur at any time during PIC assembly.

The protein resides in the plastid. It is found in the chloroplast. Functionally, one of the essential components for the initiation of protein synthesis. Stabilizes the binding of IF-2 and IF-3 on the 30S subunit to which N-formylmethionyl-tRNA(fMet) subsequently binds. Helps modulate mRNA selection, yielding the 30S pre-initiation complex (PIC). Upon addition of the 50S ribosomal subunit IF-1, IF-2 and IF-3 are released leaving the mature 70S translation initiation complex. The chain is Translation initiation factor IF-1, chloroplastic from Ceratophyllum demersum (Rigid hornwort).